The sequence spans 231 residues: Ribonuclease 3 (231 aa).

One can recognise an RNase III domain in the interval 8 to 135 (VGDLERRIGH…LMAALYQDGG (128 aa)). Position 48 (glutamate 48) interacts with Mg(2+). Active-site residues include aspartate 52 and glutamate 124. Glutamate 124 contacts Mg(2+). The region spanning 161–230 (DPKTALQEWA…AKALLEREGA (70 aa)) is the DRBM domain. A disordered region spans residues 210–231 (GKSRQEAEKAAAKALLEREGAG). Residues 212–231 (SRQEAEKAAAKALLEREGAG) are compositionally biased toward basic and acidic residues.

The protein belongs to the ribonuclease III family. Homodimer. Mg(2+) serves as cofactor.

It localises to the cytoplasm. It catalyses the reaction Endonucleolytic cleavage to 5'-phosphomonoester.. In terms of biological role, digests double-stranded RNA. Involved in the processing of primary rRNA transcript to yield the immediate precursors to the large and small rRNAs (23S and 16S). Processes some mRNAs, and tRNAs when they are encoded in the rRNA operon. Processes pre-crRNA and tracrRNA of type II CRISPR loci if present in the organism. This Caulobacter vibrioides (strain ATCC 19089 / CIP 103742 / CB 15) (Caulobacter crescentus) protein is Ribonuclease 3.